The following is a 420-amino-acid chain: Sulfate adenylyltransferase (420 aa).

Ala-2 carries the N-acetylalanine modification.

Belongs to the sulfate adenylyltransferase family. Mg(2+) serves as cofactor.

It catalyses the reaction sulfate + ATP + H(+) = adenosine 5'-phosphosulfate + diphosphate. It functions in the pathway sulfur metabolism; hydrogen sulfide biosynthesis; sulfite from sulfate: step 1/3. Inhibited by adenosine 5'-phosphosulfate (APS), but not by 3'phosphoadenosine 5'-phosphosulfate (PAPS). Inhibited by AMP, ADP, CTP, GTP, ITP, UTP and anions other than those in group IV. The polypeptide is Sulfate adenylyltransferase (Pyropia yezoensis (Susabi-nori)).